The primary structure comprises 115 residues: Large ribosomal subunit protein bL20 (115 aa).

Belongs to the bacterial ribosomal protein bL20 family.

Binds directly to 23S ribosomal RNA and is necessary for the in vitro assembly process of the 50S ribosomal subunit. It is not involved in the protein synthesizing functions of that subunit. The chain is Large ribosomal subunit protein bL20 from Pelodictyon phaeoclathratiforme (strain DSM 5477 / BU-1).